Here is a 551-residue protein sequence, read N- to C-terminus: Electron transfer flavoprotein-ubiquinone oxidoreductase (551 aa).

FAD is bound at residue 10-24 (VVIVGAGPAGLSAAC). [4Fe-4S] cluster is bound by residues Cys496, Cys520, Cys523, and Cys526. The region spanning 511-540 (KRFQINAQNCVHCKTCDIKDPAQNITWVAP) is the 4Fe-4S ferredoxin-type domain.

It belongs to the ETF-QO/FixC family. The cofactor is [4Fe-4S] cluster. FAD is required as a cofactor.

The enzyme catalyses a ubiquinone + reduced [electron-transfer flavoprotein] = a ubiquinol + oxidized [electron-transfer flavoprotein] + H(+). Accepts electrons from ETF and reduces ubiquinone. The sequence is that of Electron transfer flavoprotein-ubiquinone oxidoreductase from Pseudomonas aeruginosa (strain ATCC 15692 / DSM 22644 / CIP 104116 / JCM 14847 / LMG 12228 / 1C / PRS 101 / PAO1).